Reading from the N-terminus, the 108-residue chain is FK506-binding protein 1 (108 aa).

Positions 20 to 108 (GDAVTIHYVG…VFDVELLGIN (89 aa)) constitute a PPIase FKBP-type domain.

The protein belongs to the FKBP-type PPIase family. FKBP1 subfamily.

It localises to the cytoplasm. It catalyses the reaction [protein]-peptidylproline (omega=180) = [protein]-peptidylproline (omega=0). With respect to regulation, inhibited by both FK506 and rapamycin. In terms of biological role, PPIases accelerate the folding of proteins. It catalyzes the cis-trans isomerization of proline imidic peptide bonds in oligopeptides. This chain is FK506-binding protein 1 (FPR1), found in Yarrowia lipolytica (strain CLIB 122 / E 150) (Yeast).